Consider the following 359-residue polypeptide: Serpentine receptor class epsilon-13 (359 aa).

Transmembrane regions (helical) follow at residues 33 to 53, 74 to 94, 111 to 131, 150 to 170, 180 to 200, 237 to 257, and 266 to 286; these read YLFVFYIQIALIFIVLFYYLL, AIYLPCVLGHVMCLIQKILLI, ISLFRAIFCFPGFYCLSAFVA, WLVGLILWIIYSIAFISALDF, VTIFILLSCLAYLSNYLNFLL, LALSIAFFQISGPMCLLIDNL, and LNTVVFDTILLLYAIVTPFVI.

Belongs to the nematode receptor-like protein sre family.

The protein resides in the membrane. The sequence is that of Serpentine receptor class epsilon-13 (sre-13) from Caenorhabditis elegans.